A 472-amino-acid polypeptide reads, in one-letter code: 3-isopropylmalate dehydratase large subunit (472 aa).

Positions 353, 414, and 417 each coordinate [4Fe-4S] cluster.

The protein belongs to the aconitase/IPM isomerase family. LeuC type 1 subfamily. Heterodimer of LeuC and LeuD. The cofactor is [4Fe-4S] cluster.

It carries out the reaction (2R,3S)-3-isopropylmalate = (2S)-2-isopropylmalate. It participates in amino-acid biosynthesis; L-leucine biosynthesis; L-leucine from 3-methyl-2-oxobutanoate: step 2/4. Catalyzes the isomerization between 2-isopropylmalate and 3-isopropylmalate, via the formation of 2-isopropylmaleate. This Acinetobacter baumannii (strain AB307-0294) protein is 3-isopropylmalate dehydratase large subunit.